The primary structure comprises 222 residues: PKHD-type hydroxylase PCC8801_2196 (222 aa).

One can recognise a Fe2OG dioxygenase domain in the interval Arg-78 to Ser-175. Positions 96, 98, and 156 each coordinate Fe cation. Arg-166 contributes to the 2-oxoglutarate binding site.

It depends on Fe(2+) as a cofactor. L-ascorbate serves as cofactor.

This Rippkaea orientalis (strain PCC 8801 / RF-1) (Cyanothece sp. (strain PCC 8801)) protein is PKHD-type hydroxylase PCC8801_2196.